The following is a 314-amino-acid chain: Formimidoylglutamase (314 aa).

Histidine 127, aspartate 153, histidine 155, aspartate 157, aspartate 245, and aspartate 247 together coordinate Mn(2+).

It belongs to the arginase family. The cofactor is Mn(2+).

It catalyses the reaction N-formimidoyl-L-glutamate + H2O = formamide + L-glutamate. Its pathway is amino-acid degradation; L-histidine degradation into L-glutamate; L-glutamate from N-formimidoyl-L-glutamate (hydrolase route): step 1/1. Functionally, catalyzes the conversion of N-formimidoyl-L-glutamate to L-glutamate and formamide. In Aeromonas hydrophila subsp. hydrophila (strain ATCC 7966 / DSM 30187 / BCRC 13018 / CCUG 14551 / JCM 1027 / KCTC 2358 / NCIMB 9240 / NCTC 8049), this protein is Formimidoylglutamase.